Consider the following 798-residue polypeptide: uncharacterized protein (798 aa).

An N-terminal signal peptide occupies residues 1-22; sequence MKFKYGAIVFSGLLGVSAILAA. Residue C23 is the site of N-palmitoyl cysteine attachment. C23 carries the S-diacylglycerol cysteine lipid modification. Basic and acidic residues predominate over residues 178-192; sequence SKGAQKDNKSAEVQR. Disordered regions lie at residues 178-204, 226-260, 443-463, and 478-515; these read SKGA…TQPL, NGKK…ATSD, EVNA…QSDQ, and SDIK…TPKK. The segment covering 193-204 has biased composition (polar residues); it reads KSTGQKTVTQPL. Basic and acidic residues predominate over residues 226 to 235; it reads NGKKKEEKKS. The span at 478–495 shows a compositional bias: basic and acidic residues; sequence SDIKVKPKTQAESKKSSD. Polar residues predominate over residues 496 to 515; that stretch reads SKQTANTGKGSNSKQQTPKK.

The protein belongs to the MG185/MG260 family.

The protein resides in the cell membrane. This is an uncharacterized protein from Mycoplasma pneumoniae (strain ATCC 29342 / M129 / Subtype 1) (Mycoplasmoides pneumoniae).